The chain runs to 311 residues: Methionyl-tRNA formyltransferase (311 aa).

Residue 112–115 (SLLP) participates in (6S)-5,6,7,8-tetrahydrofolate binding.

It belongs to the Fmt family.

It carries out the reaction L-methionyl-tRNA(fMet) + (6R)-10-formyltetrahydrofolate = N-formyl-L-methionyl-tRNA(fMet) + (6S)-5,6,7,8-tetrahydrofolate + H(+). Its function is as follows. Attaches a formyl group to the free amino group of methionyl-tRNA(fMet). The formyl group appears to play a dual role in the initiator identity of N-formylmethionyl-tRNA by promoting its recognition by IF2 and preventing the misappropriation of this tRNA by the elongation apparatus. The chain is Methionyl-tRNA formyltransferase from Bradyrhizobium sp. (strain BTAi1 / ATCC BAA-1182).